We begin with the raw amino-acid sequence, 907 residues long: Chloride channel protein 2 (907 aa).

Residues M1–V93 lie on the Cytoplasmic side of the membrane. An essential for channel gating by both voltage and cell volume region spans residues Q22–A40. Residue T26 is modified to Phosphothreonine. Residues E42–W55 form a modulates channel gating by both voltage and cell volume region. 2 helical membrane passes run G94–W127 and I136–L161. The short motif at G167 to P171 is the Selectivity filter part_1 element. The segment at residues I170 to L177 is an intramembrane region (helical). Transmembrane regions (helical) follow at residues L186–S204 and E211–L229. Residues G209 to P213 carry the Selectivity filter part_2 motif. 2 consecutive intramembrane regions (helical) follow at residues M245–C257 and P261–I269. The next 5 helical transmembrane spans lie at Y281–W301, L327–M355, F364–L383, A435–A455, and G463–W486. Residues G463 to P467 carry the Selectivity filter part_3 motif. The helical intramembrane region spans G503–V517. The note=Loop between two helices intramembrane region spans T518 to H519. The helical intramembrane region spans T520–T531. Positions G532–H536 form an intramembrane region, note=Loop between two helices. The helical transmembrane segment at I537–L554 threads the bilayer. At Q555–Q907 the chain is on the cytoplasmic side. Residues M590–P648 form the CBS 1 domain. The span at R650–K660 shows a compositional bias: basic residues. The interval R650–T720 is disordered. The segment covering S664–S678 has biased composition (low complexity). Residues Q696–L705 show a composition bias toward basic residues. Residues S710 to T720 show a composition bias toward polar residues. Position 767 is a phosphoserine (S767). A CBS 2 domain is found at I799–V859. The short motif at L821–L822 is the Basolateral membrane sorting element. A disordered region spans residues S865 to Q907.

It belongs to the chloride channel (TC 2.A.49) family. ClC-2/CLCN2 subfamily. In terms of assembly, homodimer. Interacts with auxiliary subunit HEPACAM. In terms of processing, phosphorylated. Activated by dephosphorylation. As to expression, ubiquitously expressed. Expressed in neurons and glial cells (at protein level).

The protein localises to the cell membrane. Its subcellular location is the basolateral cell membrane. It localises to the cell projection. It is found in the dendritic spine membrane. The protein resides in the axon. It catalyses the reaction chloride(in) = chloride(out). The catalysed reaction is thiocyanate(in) = thiocyanate(out). The enzyme catalyses bromide(in) = bromide(out). It carries out the reaction nitrate(in) = nitrate(out). It catalyses the reaction iodide(out) = iodide(in). With respect to regulation, common gate kinetics are down-regulated by intracellular ATP. Inhibited by AK-42, a derivative of meclofenamate. Inhibited by Cd(2+). Inhibited by Zn(2+) and PKC activation. Inhibited at acidic pH. CCLN2:HEPACAM channel conductance is up-regulated upon hypo-osmolarity. Voltage-gated and osmosensitive chloride channel. Forms a homodimeric channel where each subunit has its own ion conduction pathway. Conducts double-barreled currents controlled by two types of gates, two fast glutamate gates that control each subunit independently and a slow common gate that opens and shuts off both subunits simultaneously. Displays inward rectification currents activated upon membrane hyperpolarization and extracellular hypotonicity. Contributes to chloride conductance involved in neuron excitability. In hippocampal neurons, generates a significant part of resting membrane conductance and provides an additional chloride efflux pathway to prevent chloride accumulation in dendrites upon GABA receptor activation. In glia, associates with the auxiliary subunit HEPACAM/GlialCAM at astrocytic processes and myelinated fiber tracts where it may regulate transcellular chloride flux buffering extracellular chloride and potassium concentrations. Regulates aldosterone production in adrenal glands. The opening of CLCN2 channels at hyperpolarized membrane potentials in the glomerulosa causes cell membrane depolarization, activation of voltage-gated calcium channels and increased expression of aldosterone synthase, the rate-limiting enzyme for aldosterone biosynthesis. Contributes to chloride conductance in retinal pigment epithelium involved in phagocytosis of shed photoreceptor outer segments and photoreceptor renewal. Conducts chloride currents at the basolateral membrane of epithelial cells with a role in chloride reabsorption rather than secretion. Permeable to small monovalent anions with chloride &gt; thiocyanate &gt; bromide &gt; nitrate &gt; iodide ion selectivity. The polypeptide is Chloride channel protein 2 (Clcn2) (Rattus norvegicus (Rat)).